A 142-amino-acid polypeptide reads, in one-letter code: MAKKVQALIKLQVAAGAANPSPPVGPALGQHGVNIMEFCKAFNAKTDSLEKGAPVPVVITVYSDRSFTFETKTPPASFLLKKAAGIKSGSGRPNTDKVGTVTTAQLEEIVKTKEPDLTAGSLEAAVRTIAGSARSMGLVVED.

The protein belongs to the universal ribosomal protein uL11 family. In terms of assembly, part of the ribosomal stalk of the 50S ribosomal subunit. Interacts with L10 and the large rRNA to form the base of the stalk. L10 forms an elongated spine to which L12 dimers bind in a sequential fashion forming a multimeric L10(L12)X complex. One or more lysine residues are methylated.

Functionally, forms part of the ribosomal stalk which helps the ribosome interact with GTP-bound translation factors. In Colwellia psychrerythraea (strain 34H / ATCC BAA-681) (Vibrio psychroerythus), this protein is Large ribosomal subunit protein uL11.